Consider the following 171-residue polypeptide: Bursicon (171 aa).

A signal peptide spans Met1–Ala31. Cystine bridges form between Cys47–Cys96, Cys61–Cys110, Cys71–Cys131, Cys75–Cys133, and Cys93–Cys136. The CTCK domain maps to Cys47–Thr137.

In terms of assembly, heterodimer of burs and pburs.

It is found in the secreted. Final heterodimeric neurohormone released at the end of the molting cycle, involved in the sclerotization (tanning) of the insect cuticle, melanization and wing spreading. In Culex pipiens pipiens (Northern house mosquito), this protein is Bursicon.